Consider the following 286-residue polypeptide: UDP-3-O-acyl-N-acetylglucosamine deacetylase (286 aa).

Positions 79, 237, and 241 each coordinate Zn(2+). Catalysis depends on His-264, which acts as the Proton donor.

It belongs to the LpxC family. Zn(2+) serves as cofactor.

It carries out the reaction a UDP-3-O-[(3R)-3-hydroxyacyl]-N-acetyl-alpha-D-glucosamine + H2O = a UDP-3-O-[(3R)-3-hydroxyacyl]-alpha-D-glucosamine + acetate. It functions in the pathway glycolipid biosynthesis; lipid IV(A) biosynthesis; lipid IV(A) from (3R)-3-hydroxytetradecanoyl-[acyl-carrier-protein] and UDP-N-acetyl-alpha-D-glucosamine: step 2/6. Catalyzes the hydrolysis of UDP-3-O-myristoyl-N-acetylglucosamine to form UDP-3-O-myristoylglucosamine and acetate, the committed step in lipid A biosynthesis. The sequence is that of UDP-3-O-acyl-N-acetylglucosamine deacetylase from Chlamydia trachomatis serovar A (strain ATCC VR-571B / DSM 19440 / HAR-13).